A 375-amino-acid chain; its full sequence is Alcohol dehydrogenase 1 (375 aa).

An N-acetylserine modification is found at serine 2. Residues cysteine 47, histidine 68, cysteine 98, cysteine 101, cysteine 104, cysteine 112, and cysteine 175 each coordinate Zn(2+). Residues 200–205 (GLGGVG), aspartate 224, lysine 229, 293–295 (LGV), and arginine 370 contribute to the NAD(+) site.

This sequence belongs to the zinc-containing alcohol dehydrogenase family. Class-I subfamily. In terms of assembly, homodimer. It depends on Zn(2+) as a cofactor.

It is found in the cytoplasm. It carries out the reaction a primary alcohol + NAD(+) = an aldehyde + NADH + H(+). It catalyses the reaction a secondary alcohol + NAD(+) = a ketone + NADH + H(+). This chain is Alcohol dehydrogenase 1 (ADH1), found in Apteryx australis (Southern brown kiwi).